Reading from the N-terminus, the 345-residue chain is Aminopeptidase YpdE (345 aa).

The a divalent metal cation site is built by His62 and Asp166. Residue Glu198 is the Proton acceptor of the active site. Positions 199, 221, and 308 each coordinate a divalent metal cation.

This sequence belongs to the peptidase M42 family. The cofactor is Co(2+). Ni(2+) serves as cofactor. Requires Mn(2+) as cofactor. Cu(2+) is required as a cofactor.

In terms of biological role, has a broad aminopeptidase activity on non-blocked peptides by progressively cleaving amino acids off the peptide substrate. Aminopeptidase activity stops at the residue before the first proline in the peptide. Cannot cleave when proline is the first N-terminal residue. This Escherichia coli (strain K12) protein is Aminopeptidase YpdE (ypdE).